We begin with the raw amino-acid sequence, 356 residues long: tRNA N6-adenosine threonylcarbamoyltransferase (356 aa).

Fe cation-binding residues include His-111 and His-115. Residues 143 to 147 (LASGG), Asp-178, Gly-191, Asp-195, and Asn-286 each bind substrate. Asp-314 contributes to the Fe cation binding site.

It belongs to the KAE1 / TsaD family. Fe(2+) serves as cofactor.

The protein resides in the cytoplasm. It catalyses the reaction L-threonylcarbamoyladenylate + adenosine(37) in tRNA = N(6)-L-threonylcarbamoyladenosine(37) in tRNA + AMP + H(+). Required for the formation of a threonylcarbamoyl group on adenosine at position 37 (t(6)A37) in tRNAs that read codons beginning with adenine. Is involved in the transfer of the threonylcarbamoyl moiety of threonylcarbamoyl-AMP (TC-AMP) to the N6 group of A37, together with TsaE and TsaB. TsaD likely plays a direct catalytic role in this reaction. This is tRNA N6-adenosine threonylcarbamoyltransferase from Sorangium cellulosum (strain So ce56) (Polyangium cellulosum (strain So ce56)).